The sequence spans 401 residues: UDP-GlcNAc:betaGal beta-1,3-N-acetylglucosaminyltransferase 9 (401 aa).

Topologically, residues 1–10 are cytoplasmic; that stretch reads MRRRLRLRRE. A helical; Signal-anchor for type II membrane protein transmembrane segment spans residues 11-31; it reads ALLTLLLGATLGLLLYAQQEG. The Lumenal segment spans residues 32 to 401; the sequence is AAPTTSAPRA…VPAGPFQWGP (370 aa). A disordered region spans residues 33–85; that stretch reads APTTSAPRAQGRAAPGPTPGLRVFQAPDTGAAPPAYEGDTPEPPTPTGPFDFG. The segment covering 38-47 has biased composition (low complexity); sequence APRAQGRAAP.

Belongs to the glycosyltransferase 31 family.

The protein localises to the golgi apparatus membrane. The sequence is that of UDP-GlcNAc:betaGal beta-1,3-N-acetylglucosaminyltransferase 9 from Bos taurus (Bovine).